Here is a 766-residue protein sequence, read N- to C-terminus: NADH-dependent flavin oxidoreductase iliE (766 aa).

A compositionally biased stretch (polar residues) spans 1–13 (MSEQLGSHITTPS). The interval 1-24 (MSEQLGSHITTPSSHDDASKDKRP) is disordered. The segment covering 14-24 (SHDDASKDKRP) has biased composition (basic and acidic residues). A glycan (N-linked (GlcNAc...) asparagine) is linked at Asn-30. 61–64 (AATA) is an FMN binding site. N-linked (GlcNAc...) asparagine glycosylation is found at Asn-70 and Asn-136. Gln-143 provides a ligand contact to FMN. 224-227 (HAGH) provides a ligand contact to substrate. 385–386 (AR) provides a ligand contact to FMN. One can recognise a J domain in the interval 551–622 (TPYDILAMRK…SKRSLYDTQG (72 aa)). N-linked (GlcNAc...) asparagine glycosylation is found at Asn-634, Asn-650, and Asn-654. Residues 675–695 (MYMSNGVFATLVVMMCMIGAF) form a helical membrane-spanning segment.

It belongs to the NADH:flavin oxidoreductase/NADH oxidase family.

Its subcellular location is the membrane. In terms of biological role, NADH-dependent flavin oxidoreductase; part of the gene cluster that mediates the biosynthesis of ilicicolin H, a 4-hydroxy-2-pyridonealkaloid that has potent and broad antifungal activities by inhibiting the mitochondrial respiration chain. The biosynthesis of ilicicolin H starts with formation of the tetramic acid by the hybrid PKS-NRPS synthetase iliA with the partnering trans-enoyl reductase iliB since iliA lacks a designated enoylreductase (ER) domain. The cytochrome P450 monooxygenase iliC then catalyzes the ring expansion of the tetramate to the acyclic 2-pyridone. The pericyclase iliD further converts the acyclic 2-pyridone into 8-epi-ilicicolin H. 8-epi-ilicicolin H might then spontaneously convert to ilicicolin H since ilicicolin H is produced in the absence of the epimerase iliE, in contrast to what was observed for the Talaromyces variabilis ilicolin H biosynthetic pathway. The polypeptide is NADH-dependent flavin oxidoreductase iliE (Neonectria sp. (strain DH2)).